We begin with the raw amino-acid sequence, 332 residues long: uncharacterized protein (332 aa).

The protein belongs to the bacterial solute-binding protein 1 family. WtpA subfamily.

This is an uncharacterized protein from Methanococcus maripaludis (strain DSM 14266 / JCM 13030 / NBRC 101832 / S2 / LL).